A 442-amino-acid chain; its full sequence is HTH-type transcriptional regulator NorG (442 aa).

The HTH gntR-type domain maps to 2-46; it reads KIPSHRQLAIQYNVNRVTIIKSIELLEAEGFIYTKVGSGTYVNDY. Positions 6-25 form a DNA-binding region, H-T-H motif; it reads HRQLAIQYNVNRVTIIKSIE. Position 288 is an N6-(pyridoxal phosphate)lysine (lysine 288).

The protein in the C-terminal section; belongs to the class-I pyridoxal-phosphate-dependent aminotransferase family. It depends on pyridoxal 5'-phosphate as a cofactor.

In terms of biological role, positively regulates the expression of the NorB efflux pump and negatively regulates the expression of the AbcA efflux pump. Binds specifically to the promoters of norA, norB and norC and abcA genes. Could also have an aminotransferase activity. The protein is HTH-type transcriptional regulator NorG (norG) of Staphylococcus aureus (strain USA300).